Reading from the N-terminus, the 524-residue chain is Probable pectinesterase/pectinesterase inhibitor 19 (524 aa).

An N-terminal signal peptide occupies residues 1-22 (MLVKVFSFFILMITMVVIGVSK). A pectinesterase inhibitor 19 region spans residues 23–172 (EYCDDKQSCQ…ISRARIALAL (150 aa)). A pectinesterase 19 region spans residues 215–510 (DVVVAKDGTG…FTVAKLLDGE (296 aa)). N265 and N281 each carry an N-linked (GlcNAc...) asparagine glycan. T290 contacts substrate. D343 serves as the catalytic Proton donor; for pectinesterase activity. An intrachain disulfide couples C357 to C377. D364 serves as the catalytic Nucleophile; for pectinesterase activity. N412 carries an N-linked (GlcNAc...) asparagine glycan. Residues R430 and W432 each coordinate substrate.

It in the N-terminal section; belongs to the PMEI family. This sequence in the C-terminal section; belongs to the pectinesterase family. Expressed in siliques, but not in flower buds.

It is found in the secreted. The protein resides in the cell wall. It carries out the reaction [(1-&gt;4)-alpha-D-galacturonosyl methyl ester](n) + n H2O = [(1-&gt;4)-alpha-D-galacturonosyl](n) + n methanol + n H(+). It functions in the pathway glycan metabolism; pectin degradation; 2-dehydro-3-deoxy-D-gluconate from pectin: step 1/5. In terms of biological role, acts in the modification of cell walls via demethylesterification of cell wall pectin. The chain is Probable pectinesterase/pectinesterase inhibitor 19 (PME19) from Arabidopsis thaliana (Mouse-ear cress).